The following is a 180-amino-acid chain: Large ribosomal subunit protein uL6 (180 aa).

Belongs to the universal ribosomal protein uL6 family. In terms of assembly, part of the 50S ribosomal subunit.

This protein binds to the 23S rRNA, and is important in its secondary structure. It is located near the subunit interface in the base of the L7/L12 stalk, and near the tRNA binding site of the peptidyltransferase center. The sequence is that of Large ribosomal subunit protein uL6 from Clostridioides difficile (strain 630) (Peptoclostridium difficile).